Here is a 313-residue protein sequence, read N- to C-terminus: Ribosomal RNA small subunit methyltransferase H (313 aa).

S-adenosyl-L-methionine is bound by residues 35 to 37 (GGH), D55, F79, D101, and Q108.

Belongs to the methyltransferase superfamily. RsmH family.

Its subcellular location is the cytoplasm. The enzyme catalyses cytidine(1402) in 16S rRNA + S-adenosyl-L-methionine = N(4)-methylcytidine(1402) in 16S rRNA + S-adenosyl-L-homocysteine + H(+). Specifically methylates the N4 position of cytidine in position 1402 (C1402) of 16S rRNA. In Salmonella arizonae (strain ATCC BAA-731 / CDC346-86 / RSK2980), this protein is Ribosomal RNA small subunit methyltransferase H.